A 323-amino-acid polypeptide reads, in one-letter code: Sphingolipid delta(4)-desaturase DES1 (323 aa).

Residue Gly2 is the site of N-myristoyl glycine attachment. 2 helical membrane-spanning segments follow: residues 41-61 (PNLIWIIIMMVLTQLAAFYIV) and 68-88 (WVIFGAYAFGSCINHSMTLGI). A Histidine box-1 motif is present at residues 89–93 (HEIAH). The helical transmembrane segment at 107–127 (WFGMFANLPIGIPYSVSFKSY) threads the bilayer. A Histidine box-2 motif is present at residues 128 to 132 (HMDHH). A run of 3 helical transmembrane segments spans residues 152–172 (FFCTAFRKFIWVILQPLFYAF), 184–204 (YLEVINTVAQVTFDILIYYFL), and 209–229 (LVYMLAASLLGLGLHPISGHF). The short motif at 259–263 (HNEHH) is the Histidine box-3 element. Ser307 bears the Phosphoserine mark.

Belongs to the fatty acid desaturase type 1 family. DEGS subfamily. Interacts with RLBP1; the interaction increases synthesis of chromophore-precursors by DEGS1. Myristoylation can target the enzyme to the mitochondria leading to an increase in ceramide levels.

The protein localises to the mitochondrion membrane. It is found in the endoplasmic reticulum membrane. It carries out the reaction an N-acylsphinganine + 2 Fe(II)-[cytochrome b5] + O2 + 2 H(+) = an N-acylsphing-4-enine + 2 Fe(III)-[cytochrome b5] + 2 H2O. It catalyses the reaction all-trans-retinol = 11-cis-retinol. The catalysed reaction is all-trans-retinol = 9-cis-retinol. The enzyme catalyses all-trans-retinol = 13-cis-retinol. It carries out the reaction 11-cis-retinol = 13-cis-retinol. It catalyses the reaction 11-cis-retinol = 9-cis-retinol. Has sphingolipid-delta-4-desaturase activity. Converts D-erythro-sphinganine to D-erythro-sphingosine (E-sphing-4-enine). Catalyzes the equilibrium isomerization of retinols. The polypeptide is Sphingolipid delta(4)-desaturase DES1 (DEGS1) (Pongo abelii (Sumatran orangutan)).